Reading from the N-terminus, the 301-residue chain is GTPase Era (301 aa).

The region spanning 6–173 is the Era-type G domain; it reads KSGFVAIVGR…LEQTNANLEI (168 aa). Residues 14-21 form a G1 region; sequence GRPNVGKS. GTP is bound at residue 14 to 21; the sequence is GRPNVGKS. The interval 40–44 is G2; sequence QTTRN. Residues 61–64 form a G3 region; sequence DTPG. GTP contacts are provided by residues 61-65 and 123-126; these read DTPGI and NKID. The segment at 123-126 is G4; that stretch reads NKID. A G5 region spans residues 152 to 154; it reads ISA. The KH type-2 domain maps to 204-282; the sequence is TREEVPHSVA…FLEIWVKVQK (79 aa).

Belongs to the TRAFAC class TrmE-Era-EngA-EngB-Septin-like GTPase superfamily. Era GTPase family. Monomer.

Its subcellular location is the cytoplasm. The protein localises to the cell membrane. In terms of biological role, an essential GTPase that binds both GDP and GTP, with rapid nucleotide exchange. Plays a role in 16S rRNA processing and 30S ribosomal subunit biogenesis and possibly also in cell cycle regulation and energy metabolism. The sequence is that of GTPase Era from Listeria monocytogenes serotype 4b (strain F2365).